The sequence spans 280 residues: DegV domain-containing protein CA_C1624 (280 aa).

In terms of domain architecture, DegV spans 4-279 (IALITDSTSD…PGLLGVVIFK (276 aa)). Residues T60 and S93 each contribute to the hexadecanoate site.

Functionally, may bind long-chain fatty acids, such as palmitate, and may play a role in lipid transport or fatty acid metabolism. This Clostridium acetobutylicum (strain ATCC 824 / DSM 792 / JCM 1419 / IAM 19013 / LMG 5710 / NBRC 13948 / NRRL B-527 / VKM B-1787 / 2291 / W) protein is DegV domain-containing protein CA_C1624.